The primary structure comprises 694 residues: Elongation factor G (694 aa).

One can recognise a tr-type G domain in the interval Glu-8–Ile-287. GTP is bound by residues Ala-17–Thr-24, Asp-86–His-90, and Asn-140–Asp-143.

The protein belongs to the TRAFAC class translation factor GTPase superfamily. Classic translation factor GTPase family. EF-G/EF-2 subfamily.

It localises to the cytoplasm. Functionally, catalyzes the GTP-dependent ribosomal translocation step during translation elongation. During this step, the ribosome changes from the pre-translocational (PRE) to the post-translocational (POST) state as the newly formed A-site-bound peptidyl-tRNA and P-site-bound deacylated tRNA move to the P and E sites, respectively. Catalyzes the coordinated movement of the two tRNA molecules, the mRNA and conformational changes in the ribosome. The protein is Elongation factor G of Bartonella tribocorum (strain CIP 105476 / IBS 506).